The primary structure comprises 329 residues: Taste receptor type 2 member 102 (329 aa).

At 1-9 (MNMESVLHN) the chain is on the extracellular side. Residues 10–30 (FATVLIYVEFIFGNLSNGFIV) traverse the membrane as a helical segment. The Cytoplasmic segment spans residues 31–47 (LSNFLDWVIKQKLSLID). Residues 48–68 (KILLTLAISRITLIWEIYAWF) traverse the membrane as a helical segment. Over 69-85 (KSLYDPSSFLIGIEFQI) the chain is Extracellular. The helical transmembrane segment at 86 to 108 (IYFSWVLSSHFSLWLATTLSVFY) threads the bilayer. Over 109–129 (LLRIANCSWQIFLYLKWRLKQ) the chain is Cytoplasmic. Residues 130–150 (LIVGMLLGSLVFLLGNLMQSM) form a helical membrane-spanning segment. The Extracellular segment spans residues 151-181 (LEERFYQYGRNTSVNTMSNDLAMWTELIFFN). Residue Asn161 is glycosylated (N-linked (GlcNAc...) asparagine). Residues 182–202 (MAMFSVIPFTLALISFLLLIF) traverse the membrane as a helical segment. Over 203-231 (SLWKHLQKMQLISRRHRDPSTKAHMNALR) the chain is Cytoplasmic. A helical transmembrane segment spans residues 232 to 252 (IMVSFLLLYTMHFLSLLISWI). Topologically, residues 253–262 (AQKHQSELAD) are extracellular. The helical transmembrane segment at 263-283 (IIGMITELMYPSVHSCILILG) threads the bilayer. The Cytoplasmic segment spans residues 284–329 (NSKLKQTSLCMLRHLRCRLKGENITIAYSNQITSFCVFCVANKSMR).

This sequence belongs to the G-protein coupled receptor T2R family.

The protein localises to the membrane. In terms of biological role, putative taste receptor which may play a role in the perception of bitterness. The protein is Taste receptor type 2 member 102 of Mus musculus (Mouse).